Here is a 258-residue protein sequence, read N- to C-terminus: Triosephosphate isomerase (258 aa).

9–11 (NWK) contacts substrate. His-105 functions as the Electrophile in the catalytic mechanism. The active-site Proton acceptor is Glu-176. Positions 182 and 214 each coordinate substrate.

This sequence belongs to the triosephosphate isomerase family. In terms of assembly, homodimer.

Its subcellular location is the cytoplasm. The catalysed reaction is D-glyceraldehyde 3-phosphate = dihydroxyacetone phosphate. The protein operates within carbohydrate biosynthesis; gluconeogenesis. Its pathway is carbohydrate degradation; glycolysis; D-glyceraldehyde 3-phosphate from glycerone phosphate: step 1/1. Functionally, involved in the gluconeogenesis. Catalyzes stereospecifically the conversion of dihydroxyacetone phosphate (DHAP) to D-glyceraldehyde-3-phosphate (G3P). This is Triosephosphate isomerase from Mycoplasmopsis agalactiae (strain NCTC 10123 / CIP 59.7 / PG2) (Mycoplasma agalactiae).